The chain runs to 71 residues: DNA-directed RNA polymerases II, IV and V subunit 10 (71 aa).

Positions 7, 10, 44, and 45 each coordinate Zn(2+).

Belongs to the archaeal Rpo10/eukaryotic RPB10 RNA polymerase subunit family. Component of the RNA polymerase II, IV and V complexes. Interacts with NRPD1.

The protein localises to the nucleus. Its function is as follows. DNA-dependent RNA polymerase catalyzes the transcription of DNA into RNA using the four ribonucleoside triphosphates as substrates. Component of RNA polymerase II which synthesizes mRNA precursors and many functional non-coding RNAs. Pol II is the central component of the basal RNA polymerase II transcription machinery. It is composed of mobile elements that move relative to each other. Component of RNA polymerases IV and V which mediate short-interfering RNAs (siRNA) accumulation and subsequent RNA-directed DNA methylation-dependent (RdDM) transcriptional gene silencing (TGS) of endogenous repeated sequences, including transposable elements. This is DNA-directed RNA polymerases II, IV and V subunit 10 (NRPB10) from Arabidopsis thaliana (Mouse-ear cress).